Here is a 360-residue protein sequence, read N- to C-terminus: D-alanine--D-alanine ligase (360 aa).

The ATP-grasp domain maps to 149–353 (KKLMAAEGLP…YEELLDVLVQ (205 aa)). 176–231 (KNLLGLPVFVKPARGGSSIGISRVTAWEDFNKAVGLARAHDEKVIVESEIVGSEVE) serves as a coordination point for ATP. 3 residues coordinate Mg(2+): Asp-308, Glu-320, and Asn-322.

It belongs to the D-alanine--D-alanine ligase family. Requires Mg(2+) as cofactor. Mn(2+) serves as cofactor.

It is found in the cytoplasm. The enzyme catalyses 2 D-alanine + ATP = D-alanyl-D-alanine + ADP + phosphate + H(+). Its pathway is cell wall biogenesis; peptidoglycan biosynthesis. In terms of biological role, cell wall formation. This Corynebacterium glutamicum (strain R) protein is D-alanine--D-alanine ligase.